The chain runs to 248 residues: Ras-related protein Rab-28 (248 aa).

Residues 1 to 30 (MTTMGEDEAPALPKKSPLPEKIDEADVDDD) are disordered. 42–50 (GDGASGKTS) is a binding site for GTP. Positions 64 to 72 (YHQTLGLDF) match the Effector region motif. Residues 91–95 (DIGGQ), 152–155 (NKTD), and 182–184 (SAK) each bind GTP. Residues 227 to 248 (QSDASYARRSDQSRSTSVCSIT) form a disordered region. Residues 239–248 (SRSTSVCSIT) show a composition bias toward polar residues.

Belongs to the small GTPase superfamily. Rab family. In terms of tissue distribution, expressed in amphid and phasmid ciliated sensory neurons.

It is found in the cell projection. It localises to the cilium membrane. The protein resides in the perikaryon. The protein localises to the cytoplasm. Its subcellular location is the cytoskeleton. It is found in the cilium axoneme. GTPase. Intraflagellar transport (IFT) cargo that undergoes bidirectional IFT along the ciliary axoneme when in active GTP-bound state in amphid and phasmid ciliated sensory neurons. Targeting and function as IFT cargo may depend on the BBSome, an IFT cargo adapter. Does not undergo IFT when in inactive GDP-bound state. May in turn play a role in cilium structure and/or function in ciliated sensory neurons. This is Ras-related protein Rab-28 from Caenorhabditis elegans.